Reading from the N-terminus, the 170-residue chain is Peptide deformylase (170 aa).

Fe cation is bound by residues C94 and H136. E137 is a catalytic residue. H140 provides a ligand contact to Fe cation.

Belongs to the polypeptide deformylase family. The cofactor is Fe(2+).

The enzyme catalyses N-terminal N-formyl-L-methionyl-[peptide] + H2O = N-terminal L-methionyl-[peptide] + formate. Its function is as follows. Removes the formyl group from the N-terminal Met of newly synthesized proteins. Requires at least a dipeptide for an efficient rate of reaction. N-terminal L-methionine is a prerequisite for activity but the enzyme has broad specificity at other positions. This is Peptide deformylase from Stenotrophomonas maltophilia (strain R551-3).